A 760-amino-acid chain; its full sequence is DNA-directed RNA polymerase subunit beta' (760 aa).

4 residues coordinate Zn(2+): C76, C78, C90, and C93. Positions 594, 596, and 598 each coordinate Mg(2+).

This sequence belongs to the RNA polymerase beta' chain family. RpoC1 subfamily. As to quaternary structure, in plastids the minimal PEP RNA polymerase catalytic core is composed of four subunits: alpha, beta, beta', and beta''. When a (nuclear-encoded) sigma factor is associated with the core the holoenzyme is formed, which can initiate transcription. Mg(2+) serves as cofactor. The cofactor is Zn(2+).

It is found in the plastid. The protein resides in the chloroplast. The catalysed reaction is RNA(n) + a ribonucleoside 5'-triphosphate = RNA(n+1) + diphosphate. In terms of biological role, DNA-dependent RNA polymerase catalyzes the transcription of DNA into RNA using the four ribonucleoside triphosphates as substrates. The polypeptide is DNA-directed RNA polymerase subunit beta' (Bigelowiella natans (Pedinomonas minutissima)).